The primary structure comprises 282 residues: Large ribosomal subunit protein uL4c (282 aa).

A chloroplast-targeting transit peptide spans 1-43 (MAASLSFFSSSIFLSNPNIQSSKHLLFRSPKQLSVAAIATIRS). Disordered stretches follow at residues 86–133 (RNQR…GGVV) and 251–282 (RYGD…ESSE). Positions 255-282 (ENEWEDEEEDDQEDNDGGEAEESTESSE) are enriched in acidic residues.

This sequence belongs to the universal ribosomal protein uL4 family. In terms of assembly, part of the 50S ribosomal subunit.

The protein resides in the plastid. The protein localises to the chloroplast. This protein binds directly and specifically to 23S rRNA. May play a role in plastid transcriptional regulation. In Nicotiana tabacum (Common tobacco), this protein is Large ribosomal subunit protein uL4c (RPL4).